Consider the following 219-residue polypeptide: Octanoyltransferase (219 aa).

Residues 32-207 enclose the BPL/LPL catalytic domain; the sequence is SSSPDQLWIV…TFSHNLGYQN (176 aa). Substrate is bound by residues 71–78, 138–140, and 151–153; these read RGGQVTYH, SLG, and GLA. C169 functions as the Acyl-thioester intermediate in the catalytic mechanism.

The protein belongs to the LipB family.

The protein localises to the cytoplasm. It catalyses the reaction octanoyl-[ACP] + L-lysyl-[protein] = N(6)-octanoyl-L-lysyl-[protein] + holo-[ACP] + H(+). The protein operates within protein modification; protein lipoylation via endogenous pathway; protein N(6)-(lipoyl)lysine from octanoyl-[acyl-carrier-protein]: step 1/2. In terms of biological role, catalyzes the transfer of endogenously produced octanoic acid from octanoyl-acyl-carrier-protein onto the lipoyl domains of lipoate-dependent enzymes. Lipoyl-ACP can also act as a substrate although octanoyl-ACP is likely to be the physiological substrate. The protein is Octanoyltransferase of Shewanella woodyi (strain ATCC 51908 / MS32).